A 243-amino-acid polypeptide reads, in one-letter code: MSDVTLLRIGIAIVGILFVAAVFFFSTPKTSAHRVRTKKEEPPRERREPMLSTEVDNSPHQSVDEVPASVPQQQVNPEATKPGEIELGKRPTNHFDKIILLFVAAKAEHTLRGEDIVVAAEKTGMIFGYMNVFHRLVEGYPERGPIFSMASILKPGSFDMANIREMQIPAISFFLTLPAPMTALDAWEKMLPTVQRMAELLDGVVLDESRNALGRQRIAHIRDELRAYDRQQQVPPLIKNSRW.

Over 1 to 4 the chain is Periplasmic; the sequence is MSDV. Residues 5–25 traverse the membrane as a helical segment; it reads TLLRIGIAIVGILFVAAVFFF. Over 26-243 the chain is Cytoplasmic; sequence STPKTSAHRV…VPPLIKNSRW (218 aa). The segment at 32 to 89 is disordered; the sequence is AHRVRTKKEEPPRERREPMLSTEVDNSPHQSVDEVPASVPQQQVNPEATKPGEIELGK. Positions 38–49 are enriched in basic and acidic residues; sequence KKEEPPRERREP.

This sequence belongs to the ZipA family. In terms of assembly, interacts with FtsZ via their C-terminal domains.

Its subcellular location is the cell inner membrane. Functionally, essential cell division protein that stabilizes the FtsZ protofilaments by cross-linking them and that serves as a cytoplasmic membrane anchor for the Z ring. Also required for the recruitment to the septal ring of downstream cell division proteins. The polypeptide is Cell division protein ZipA (Xylella fastidiosa (strain Temecula1 / ATCC 700964)).